The primary structure comprises 323 residues: MGNSASRSDFEWVYTDQPHTQRRKEILAKYPAIKALMRPDPRLKWAVLVLVLVQMLACWLVRGLAWRWLLFWAYAFGGCVNHSLTLAIHDISHNAAFGTGRAARNRWLAVFANLPVGVPYAASFKKYHVDHHRYLGGDGLDVDVPTRLEGWFFCTPARKLLWLVLQPFFYSLRPLCVHPKAVTRMEVLNTLVQLAADLAIFALWGLKPVVYLLASSFLGLGLHPISGHFVAEHYMFLKGHETYSYYGPLNWITFNVGYHVEHHDFPSIPGYNLPLVRKIAPEYYDHLPQHHSWVKVLWDFVFEDSLGPYARVKRVYRLAKDGL.

G2 carries N-myristoyl glycine lipidation. 2 helical membrane passes run 45 to 65 and 68 to 88; these read WAVL…RGLA and WLLF…TLAI. The Histidine box-1 signature appears at 89–93; it reads HDISH. A required for C4-hydroxylase activity region spans residues 95-99; the sequence is AAFGT. Positions 128 to 132 match the Histidine box-2 motif; sequence HVDHH. A helical transmembrane segment spans residues 210–231; that stretch reads VYLLASSFLGLGLHPISGHFVA. Positions 259–263 match the Histidine box-3 motif; that stretch reads HVEHH.

This sequence belongs to the fatty acid desaturase type 1 family. DEGS subfamily. As to expression, highly expressed in skin, intestine and kidney.

Its subcellular location is the endoplasmic reticulum membrane. It catalyses the reaction a dihydroceramide + 2 Fe(II)-[cytochrome b5] + O2 + 2 H(+) = a phytoceramide + 2 Fe(III)-[cytochrome b5] + H2O. The catalysed reaction is an N-acylsphinganine + 2 Fe(II)-[cytochrome b5] + O2 + 2 H(+) = an N-acylsphing-4-enine + 2 Fe(III)-[cytochrome b5] + 2 H2O. It carries out the reaction N-octanoylsphinganine + 2 Fe(II)-[cytochrome b5] + O2 + 2 H(+) = N-octanoyl-4-hydroxysphinganine + 2 Fe(III)-[cytochrome b5] + H2O. The enzyme catalyses an N-acylsphinganine + 2 Fe(II)-[cytochrome b5] + O2 + 2 H(+) = an N-acyl-(4R)-4-hydroxysphinganine + 2 Fe(III)-[cytochrome b5] + H2O. It participates in membrane lipid metabolism; sphingolipid biosynthesis. Its function is as follows. Bifunctional enzyme which acts both as a sphingolipid delta(4)-desaturase and a sphingolipid C4-monooxygenase. The polypeptide is Sphingolipid delta(4)-desaturase/C4-monooxygenase DES2 (Homo sapiens (Human)).